The following is a 350-amino-acid chain: Phosphotriesterase-related protein (350 aa).

A divalent metal cation is bound by residues His22, His24, Glu169, His201, His230, and Asp298.

This sequence belongs to the metallo-dependent hydrolases superfamily. Phosphotriesterase family. It depends on a divalent metal cation as a cofactor.

The polypeptide is Phosphotriesterase-related protein (Drosophila yakuba (Fruit fly)).